The sequence spans 546 residues: 2-isopropylmalate synthase (546 aa).

The Pyruvate carboxyltransferase domain occupies 8–271 (ILIFDTTLRD…NKFFNRNSDS (264 aa)). Mn(2+)-binding residues include Asp-17, His-208, His-210, and Asn-244. The segment at 408–546 (QLSLVQVSCG…DKTLLSNPGK (139 aa)) is regulatory domain.

It belongs to the alpha-IPM synthase/homocitrate synthase family. LeuA type 1 subfamily. Homodimer. It depends on Mn(2+) as a cofactor.

It is found in the cytoplasm. The enzyme catalyses 3-methyl-2-oxobutanoate + acetyl-CoA + H2O = (2S)-2-isopropylmalate + CoA + H(+). It participates in amino-acid biosynthesis; L-leucine biosynthesis; L-leucine from 3-methyl-2-oxobutanoate: step 1/4. Catalyzes the condensation of the acetyl group of acetyl-CoA with 3-methyl-2-oxobutanoate (2-ketoisovalerate) to form 3-carboxy-3-hydroxy-4-methylpentanoate (2-isopropylmalate). In Prochlorococcus marinus (strain MIT 9215), this protein is 2-isopropylmalate synthase.